Reading from the N-terminus, the 55-residue chain is Large ribosomal subunit protein bL33m (55 aa).

It belongs to the bacterial ribosomal protein bL33 family. As to quaternary structure, component of the mitochondrial large ribosomal subunit (mt-LSU). Mature yeast 74S mitochondrial ribosomes consist of a small (37S) and a large (54S) subunit. The 37S small subunit contains a 15S ribosomal RNA (15S mt-rRNA) and at least 32 different proteins. The 54S large subunit contains a 21S rRNA (21S mt-rRNA) and at least 45 different proteins. bL33m stabilizes the tRNA acceptor stem in the E-site.

It localises to the mitochondrion. Component of the mitochondrial ribosome (mitoribosome), a dedicated translation machinery responsible for the synthesis of mitochondrial genome-encoded proteins, including at least some of the essential transmembrane subunits of the mitochondrial respiratory chain. The mitoribosomes are attached to the mitochondrial inner membrane and translation products are cotranslationally integrated into the membrane. The sequence is that of Large ribosomal subunit protein bL33m (mrpl39) from Schizosaccharomyces pombe (strain 972 / ATCC 24843) (Fission yeast).